The sequence spans 320 residues: Probable cell division protein WhiA (320 aa).

Residues 282–315 (TLKELGEMLSPAIGKSGVNHRLRKIDEIATKLQE) constitute a DNA-binding region (H-T-H motif).

Belongs to the WhiA family.

Involved in cell division and chromosome segregation. In Alkaliphilus oremlandii (strain OhILAs) (Clostridium oremlandii (strain OhILAs)), this protein is Probable cell division protein WhiA.